The sequence spans 121 residues: Small ribosomal subunit protein uS13 (121 aa).

A disordered region spans residues 94-121; that stretch reads GLPVRGQRTRTNARTRKGKRKTVAGKKK.

This sequence belongs to the universal ribosomal protein uS13 family. As to quaternary structure, part of the 30S ribosomal subunit. Forms a loose heterodimer with protein S19. Forms two bridges to the 50S subunit in the 70S ribosome.

Located at the top of the head of the 30S subunit, it contacts several helices of the 16S rRNA. In the 70S ribosome it contacts the 23S rRNA (bridge B1a) and protein L5 of the 50S subunit (bridge B1b), connecting the 2 subunits; these bridges are implicated in subunit movement. Contacts the tRNAs in the A and P-sites. The polypeptide is Small ribosomal subunit protein uS13 (Treponema pallidum (strain Nichols)).